Consider the following 186-residue polypeptide: MTDCSRCAGTNASGPNYWSERIRDIVDFPKPGIVFKDITPLLSDGPDFASALDEMAQPWRTTPLDAVLGIEALGFILGAALARELRTGFVPVRKPGKLPGRTLIREYALEYGTDRIEMHEGALPRGARVLIVDDVLATGGTLRAALGLAAQLELEIVGAAVLVELLALQGRQKWADDVPLLATLSF.

It belongs to the purine/pyrimidine phosphoribosyltransferase family. As to quaternary structure, homodimer.

Its subcellular location is the cytoplasm. The catalysed reaction is AMP + diphosphate = 5-phospho-alpha-D-ribose 1-diphosphate + adenine. The protein operates within purine metabolism; AMP biosynthesis via salvage pathway; AMP from adenine: step 1/1. Functionally, catalyzes a salvage reaction resulting in the formation of AMP, that is energically less costly than de novo synthesis. In Xanthomonas oryzae pv. oryzae (strain PXO99A), this protein is Adenine phosphoribosyltransferase.